Consider the following 313-residue polypeptide: UDP-N-acetylenolpyruvoylglucosamine reductase (313 aa).

Residues 31–207 (VGGPADALVA…TGVDLGLGFD (177 aa)) form the FAD-binding PCMH-type domain. The active site involves Arg180. The Proton donor role is filled by Cys236. Glu307 is an active-site residue.

This sequence belongs to the MurB family. FAD is required as a cofactor.

It is found in the cytoplasm. The enzyme catalyses UDP-N-acetyl-alpha-D-muramate + NADP(+) = UDP-N-acetyl-3-O-(1-carboxyvinyl)-alpha-D-glucosamine + NADPH + H(+). Its pathway is cell wall biogenesis; peptidoglycan biosynthesis. In terms of biological role, cell wall formation. In Desulfosudis oleivorans (strain DSM 6200 / JCM 39069 / Hxd3) (Desulfococcus oleovorans), this protein is UDP-N-acetylenolpyruvoylglucosamine reductase.